An 841-amino-acid chain; its full sequence is DNA mismatch repair protein MutS (841 aa).

600-607 (GPNMAGKS) lines the ATP pocket.

Belongs to the DNA mismatch repair MutS family.

In terms of biological role, this protein is involved in the repair of mismatches in DNA. It is possible that it carries out the mismatch recognition step. This protein has a weak ATPase activity. The sequence is that of DNA mismatch repair protein MutS from Carboxydothermus hydrogenoformans (strain ATCC BAA-161 / DSM 6008 / Z-2901).